Here is a 387-residue protein sequence, read N- to C-terminus: Succinate--CoA ligase [ADP-forming] subunit beta (387 aa).

Residues 9–244 form the ATP-grasp domain; it reads KHILSKFGVN…YDEEIKEEIE (236 aa). ATP is bound by residues K46, 53–55, E99, C102, and E107; that span reads GRG. Residues N199 and D213 each contribute to the Mg(2+) site. Residues N264 and 321–323 each bind substrate; that span reads GIM.

The protein belongs to the succinate/malate CoA ligase beta subunit family. Heterotetramer of two alpha and two beta subunits. The cofactor is Mg(2+).

It catalyses the reaction succinate + ATP + CoA = succinyl-CoA + ADP + phosphate. The catalysed reaction is GTP + succinate + CoA = succinyl-CoA + GDP + phosphate. It functions in the pathway carbohydrate metabolism; tricarboxylic acid cycle; succinate from succinyl-CoA (ligase route): step 1/1. Functionally, succinyl-CoA synthetase functions in the citric acid cycle (TCA), coupling the hydrolysis of succinyl-CoA to the synthesis of either ATP or GTP and thus represents the only step of substrate-level phosphorylation in the TCA. The beta subunit provides nucleotide specificity of the enzyme and binds the substrate succinate, while the binding sites for coenzyme A and phosphate are found in the alpha subunit. This is Succinate--CoA ligase [ADP-forming] subunit beta from Ehrlichia chaffeensis (strain ATCC CRL-10679 / Arkansas).